We begin with the raw amino-acid sequence, 68 residues long: Large ribosomal subunit protein bL33c (68 aa).

Belongs to the bacterial ribosomal protein bL33 family.

The protein resides in the plastid. The protein localises to the chloroplast. This is Large ribosomal subunit protein bL33c from Lactuca sativa (Garden lettuce).